Reading from the N-terminus, the 199-residue chain is 7-methyl-GTP pyrophosphatase (199 aa).

Catalysis depends on D76, which acts as the Proton acceptor.

Belongs to the Maf family. YceF subfamily. It depends on a divalent metal cation as a cofactor.

The protein localises to the cytoplasm. It catalyses the reaction N(7)-methyl-GTP + H2O = N(7)-methyl-GMP + diphosphate + H(+). Functionally, nucleoside triphosphate pyrophosphatase that hydrolyzes 7-methyl-GTP (m(7)GTP). May have a dual role in cell division arrest and in preventing the incorporation of modified nucleotides into cellular nucleic acids. This Nitrosococcus oceani (strain ATCC 19707 / BCRC 17464 / JCM 30415 / NCIMB 11848 / C-107) protein is 7-methyl-GTP pyrophosphatase.